Here is a 1144-residue protein sequence, read N- to C-terminus: Alpha-mannosidase 2 (1144 aa).

Residues methionine 1–arginine 5 lie on the Cytoplasmic side of the membrane. A helical; Signal-anchor for type II membrane protein membrane pass occupies residues glutamine 6–leucine 26. Over aspartate 27 to arginine 1144 the chain is Lumenal. An N-linked (GlcNAc...) asparagine glycan is attached at asparagine 78. Residues serine 80 and serine 82 each carry the phosphoserine modification. N-linked (GlcNAc...) asparagine glycosylation occurs at asparagine 93. Positions 175, 177, 289, and 569 each coordinate Zn(2+). Aspartate 289 (nucleophile) is an active-site residue. Asparagine 1125 carries an N-linked (GlcNAc...) asparagine glycan.

It belongs to the glycosyl hydrolase 38 family. Homodimer; disulfide-linked. It depends on Zn(2+) as a cofactor. Post-translationally, glycosylated.

The protein localises to the golgi apparatus membrane. It carries out the reaction N(4)-{beta-D-GlcNAc-(1-&gt;2)-alpha-D-Man-(1-&gt;3)-[alpha-D-Man-(1-&gt;3)-[alpha-D-Man-(1-&gt;6)]-alpha-D-Man-(1-&gt;6)]-beta-D-Man-(1-&gt;4)-beta-D-GlcNAc-(1-&gt;4)-beta-D-GlcNAc}-L-asparaginyl-[protein] + 2 H2O = 2 alpha-D-mannopyranose + an N(4)-{beta-D-GlcNAc-(1-&gt;2)-alpha-D-Man-(1-&gt;3)-[alpha-D-Man-(1-&gt;6)]-beta-D-Man-(1-&gt;4)-beta-D-GlcNAc-(1-&gt;4)-beta-D-GlcNAc}-L-asparaginyl-[protein]. It functions in the pathway protein modification; protein glycosylation. Its function is as follows. Catalyzes the first committed step in the biosynthesis of complex N-glycans. It controls conversion of high mannose to complex N-glycans; the final hydrolytic step in the N-glycan maturation pathway. The chain is Alpha-mannosidase 2 (MAN2A1) from Homo sapiens (Human).